The sequence spans 345 residues: Phosphoribosylformylglycinamidine cyclo-ligase (345 aa).

Belongs to the AIR synthase family.

Its subcellular location is the cytoplasm. It carries out the reaction 2-formamido-N(1)-(5-O-phospho-beta-D-ribosyl)acetamidine + ATP = 5-amino-1-(5-phospho-beta-D-ribosyl)imidazole + ADP + phosphate + H(+). The protein operates within purine metabolism; IMP biosynthesis via de novo pathway; 5-amino-1-(5-phospho-D-ribosyl)imidazole from N(2)-formyl-N(1)-(5-phospho-D-ribosyl)glycinamide: step 2/2. The polypeptide is Phosphoribosylformylglycinamidine cyclo-ligase (Pseudoalteromonas atlantica (strain T6c / ATCC BAA-1087)).